We begin with the raw amino-acid sequence, 205 residues long: Imidazoleglycerol-phosphate dehydratase (205 aa).

It belongs to the imidazoleglycerol-phosphate dehydratase family.

It is found in the cytoplasm. It carries out the reaction D-erythro-1-(imidazol-4-yl)glycerol 3-phosphate = 3-(imidazol-4-yl)-2-oxopropyl phosphate + H2O. Its pathway is amino-acid biosynthesis; L-histidine biosynthesis; L-histidine from 5-phospho-alpha-D-ribose 1-diphosphate: step 6/9. This is Imidazoleglycerol-phosphate dehydratase from Chloroflexus aurantiacus (strain ATCC 29366 / DSM 635 / J-10-fl).